A 285-amino-acid polypeptide reads, in one-letter code: Small ribosomal subunit biogenesis GTPase RsgA (285 aa).

The CP-type G domain occupies 61 to 215; sequence KNQLIRPKVA…IIDSPGFSSF (155 aa). GTP-binding positions include 110-113 and 159-167; these read TKID and GQTGVGKTS. 4 residues coordinate Zn(2+): C239, C244, H246, and C254.

It belongs to the TRAFAC class YlqF/YawG GTPase family. RsgA subfamily. Monomer. Associates with 30S ribosomal subunit, binds 16S rRNA. It depends on Zn(2+) as a cofactor.

The protein resides in the cytoplasm. Its function is as follows. One of several proteins that assist in the late maturation steps of the functional core of the 30S ribosomal subunit. Helps release RbfA from mature subunits. May play a role in the assembly of ribosomal proteins into the subunit. Circularly permuted GTPase that catalyzes slow GTP hydrolysis, GTPase activity is stimulated by the 30S ribosomal subunit. In Mesomycoplasma hyopneumoniae (strain 7448) (Mycoplasma hyopneumoniae), this protein is Small ribosomal subunit biogenesis GTPase RsgA.